The sequence spans 122 residues: Serum amyloid A-2 protein (122 aa).

Residues 1-18 (MKPFLSIIFCFLVLGVDS) form the signal peptide. The residue at position 19 (glutamine 19) is a Pyrrolidone carboxylic acid. Positions 100 to 122 (ANEWGRSGKDPNFFRPPGLPSKY) are disordered.

This sequence belongs to the SAA family. In terms of assembly, apolipoprotein of the HDL complex. Expressed by the liver; secreted in plasma.

Its subcellular location is the secreted. Its function is as follows. Major acute phase reactant. The polypeptide is Serum amyloid A-2 protein (SAA2) (Mesocricetus auratus (Golden hamster)).